We begin with the raw amino-acid sequence, 596 residues long: Elongation factor 4 (596 aa).

One can recognise a tr-type G domain in the interval Arg2 to Thr184. GTP is bound by residues Asp14–Thr19 and Asn131–Asp134.

It belongs to the TRAFAC class translation factor GTPase superfamily. Classic translation factor GTPase family. LepA subfamily.

Its subcellular location is the cell inner membrane. The catalysed reaction is GTP + H2O = GDP + phosphate + H(+). Its function is as follows. Required for accurate and efficient protein synthesis under certain stress conditions. May act as a fidelity factor of the translation reaction, by catalyzing a one-codon backward translocation of tRNAs on improperly translocated ribosomes. Back-translocation proceeds from a post-translocation (POST) complex to a pre-translocation (PRE) complex, thus giving elongation factor G a second chance to translocate the tRNAs correctly. Binds to ribosomes in a GTP-dependent manner. The sequence is that of Elongation factor 4 from Xanthomonas oryzae pv. oryzae (strain PXO99A).